We begin with the raw amino-acid sequence, 616 residues long: Dihydroxy-acid dehydratase (616 aa).

Asp81 lines the Mg(2+) pocket. A [2Fe-2S] cluster-binding site is contributed by Cys122. Residues Asp123 and Lys124 each coordinate Mg(2+). Lys124 carries the post-translational modification N6-carboxylysine. Position 195 (Cys195) interacts with [2Fe-2S] cluster. A Mg(2+)-binding site is contributed by Glu491. The Proton acceptor role is filled by Ser517.

It belongs to the IlvD/Edd family. As to quaternary structure, homodimer. [2Fe-2S] cluster serves as cofactor. It depends on Mg(2+) as a cofactor.

The enzyme catalyses (2R)-2,3-dihydroxy-3-methylbutanoate = 3-methyl-2-oxobutanoate + H2O. It carries out the reaction (2R,3R)-2,3-dihydroxy-3-methylpentanoate = (S)-3-methyl-2-oxopentanoate + H2O. It participates in amino-acid biosynthesis; L-isoleucine biosynthesis; L-isoleucine from 2-oxobutanoate: step 3/4. The protein operates within amino-acid biosynthesis; L-valine biosynthesis; L-valine from pyruvate: step 3/4. Functionally, functions in the biosynthesis of branched-chain amino acids. Catalyzes the dehydration of (2R,3R)-2,3-dihydroxy-3-methylpentanoate (2,3-dihydroxy-3-methylvalerate) into 2-oxo-3-methylpentanoate (2-oxo-3-methylvalerate) and of (2R)-2,3-dihydroxy-3-methylbutanoate (2,3-dihydroxyisovalerate) into 2-oxo-3-methylbutanoate (2-oxoisovalerate), the penultimate precursor to L-isoleucine and L-valine, respectively. The protein is Dihydroxy-acid dehydratase of Salmonella paratyphi A (strain ATCC 9150 / SARB42).